Consider the following 230-residue polypeptide: Urease accessory protein UreG (230 aa).

Position 33-40 (33-40) interacts with GTP; it reads GPVGSGKT.

This sequence belongs to the SIMIBI class G3E GTPase family. UreG subfamily. Homodimer. UreD, UreF and UreG form a complex that acts as a GTP-hydrolysis-dependent molecular chaperone, activating the urease apoprotein by helping to assemble the nickel containing metallocenter of UreC. The UreE protein probably delivers the nickel.

Its subcellular location is the cytoplasm. Facilitates the functional incorporation of the urease nickel metallocenter. This process requires GTP hydrolysis, probably effectuated by UreG. The sequence is that of Urease accessory protein UreG from Mycobacteroides abscessus (strain ATCC 19977 / DSM 44196 / CCUG 20993 / CIP 104536 / JCM 13569 / NCTC 13031 / TMC 1543 / L948) (Mycobacterium abscessus).